The sequence spans 481 residues: Beta-amyrin 16-beta-monooxygenase (481 aa).

A helical membrane pass occupies residues 4-24 (LFIIISLVIVILTTIFILSNL). Cysteine 428 contacts heme.

The protein belongs to the cytochrome P450 family. Heme is required as a cofactor. In terms of tissue distribution, highly expressed in roots. Expressed at very low levels in leaves and petals.

The protein localises to the membrane. It catalyses the reaction beta-amyrin + reduced [NADPH--hemoprotein reductase] + O2 = maniladiol + oxidized [NADPH--hemoprotein reductase] + H2O + H(+). The enzyme catalyses oleanolate + reduced [NADPH--hemoprotein reductase] + O2 = cochalate + oxidized [NADPH--hemoprotein reductase] + H2O + H(+). Involved in triterpenoid saponin biosynthesis in roots. Catalyzes the hydroxylation of beta-amyrin at the C-16 beta position to form maniladiol. Is also able to oxidize oleanolat to cochalate. Has weak activity catalyzing the three-step oxidation at C-28 of beta-amyrin to form oleanolate. This is Beta-amyrin 16-beta-monooxygenase from Platycodon grandiflorus (Balloon flower).